We begin with the raw amino-acid sequence, 153 residues long: Arachidonate 5-lipoxygenase-activating protein (153 aa).

Over 1-8 the chain is Lumenal; it reads MDQETVGN. The helical transmembrane segment at 9 to 30 threads the bilayer; sequence VVLLAIVTLISVIQNGFFAHKV. Topologically, residues 31-52 are cytoplasmic; sequence EHESKTQNGRSFQRTGTLAFER. The helical transmembrane segment at 53–77 threads the bilayer; that stretch reads VYTANQNCVDAYPTFLVMLWSAGLL. At 78–80 the chain is on the lumenal side; sequence CSQ. Residues 81–102 form a helical membrane-spanning segment; the sequence is VPAAFAGLMYLFVRQKYFVGYL. Residues 103-107 lie on the Cytoplasmic side of the membrane; sequence GERRQ. Residues 108-115 lie within the membrane without spanning it; the sequence is STPGYIFG. The helical transmembrane segment at 116–128 threads the bilayer; it reads KRIILFLFLMSLA. Residues 129–153 lie on the Lumenal side of the membrane; it reads GIFNYYLILFFGSDFENYIKTITTT.

The protein belongs to the MAPEG family. In terms of assembly, homotrimer. Interacts with LTC4S and ALOX5.

It is found in the nucleus membrane. It localises to the endoplasmic reticulum membrane. Its function is as follows. Required for leukotriene biosynthesis by ALOX5 (5-lipoxygenase). Anchors ALOX5 to the membrane. Binds arachidonic acid, and could play an essential role in the transfer of arachidonic acid to ALOX5. Binds to MK-886, a compound that blocks the biosynthesis of leukotrienes. The protein is Arachidonate 5-lipoxygenase-activating protein (ALOX5AP) of Equus caballus (Horse).